The chain runs to 241 residues: DnaJ homolog subfamily B member 6 (241 aa).

The tract at residues 2-146 (VDYYEVLGVQ…TGSFFSAFSG (145 aa)) is interaction with HSP70. The 67-residue stretch at 3–69 (DYYEVLGVQR…KKRDIYDKYG (67 aa)) folds into the J domain. The interaction with KRT18 stretch occupies residues 119–241 (FEDFFGNRRG…KEQLLRLDNK (123 aa)). Residue arginine 135 is modified to Omega-N-methylarginine.

In terms of assembly, homooligomer. Interacts with BAG3, HSPB8 and STUB1. Interacts with ALKBH1. Interacts with HSP70, KRT18 and PTTG.

It is found in the cytoplasm. The protein resides in the perinuclear region. Its subcellular location is the nucleus. The protein localises to the myofibril. It localises to the sarcomere. It is found in the z line. Functionally, has a stimulatory effect on the ATPase activity of HSP70 in a dose-dependent and time-dependent manner and hence acts as a co-chaperone of HSP70. Plays an indispensable role in the organization of KRT8/KRT18 filaments. Acts as an endogenous molecular chaperone for neuronal proteins including huntingtin. Suppresses aggregation and toxicity of polyglutamine-containing, aggregation-prone proteins. Also reduces cellular toxicity and caspase-3 activity. In Macaca fascicularis (Crab-eating macaque), this protein is DnaJ homolog subfamily B member 6.